A 213-amino-acid chain; its full sequence is RxLR effector protein PexRD1 (213 aa).

An N-terminal signal peptide occupies residues 1-19 (MRACNTLLPTAIVLTSCDA). Positions 50–77 (RQLRGFYATENTDPVNNQDTAHEDGEER) match the RxLR-dEER motif.

The protein belongs to the RxLR effector family.

It localises to the secreted. It is found in the host nucleus. Functionally, effector that enhances P.infestans colonization of Nicotiana benthamiana leaves. In Phytophthora infestans (strain T30-4) (Potato late blight agent), this protein is RxLR effector protein PexRD1.